The following is a 2344-amino-acid chain: Pecanex-like protein 1 (2344 aa).

A run of 2 helical transmembrane segments spans residues 33–53 (ALHL…YMAL) and 57–77 (MIIV…LKMV). Disordered regions lie at residues 101-163 (QRAK…GSSR), 271-290 (SHSY…SSSA), 306-692 (QQQR…TRAR), and 749-837 (VTRS…VQSR). Residues 143-163 (SSRNSYAGLDPSNQIGSGSSR) are compositionally biased toward polar residues. Positions 272 to 282 (HSYRKEHRPRG) are enriched in basic residues. Over residues 328 to 343 (RESSAGKSCPPAQSQP) the composition is skewed to polar residues. Residues 372 to 390 (SLRSLSTRSSGSTESYCSG) are compositionally biased toward low complexity. Polar residues predominate over residues 396–406 (NSTLSSYKSEQ). Basic and acidic residues-rich tracts occupy residues 416–458 (LSEH…DKTA), 508–522 (RPPE…EQSE), and 531–547 (RVCK…DVRP). The segment covering 557–572 (TSAHKPGRRRTGKKRA) has biased composition (basic residues). Positions 616–638 (SIHSAHQFSSDSSSSATSHSCQS) are enriched in low complexity. Residues 749-758 (VTRSRNSLPS) show a composition bias toward polar residues. 2 stretches are compositionally biased toward low complexity: residues 770-781 (AATGAAQASEEA) and 817-835 (LSLQ…VKVQ). The next 3 membrane-spanning stretches (helical) occupy residues 1010 to 1030 (ILAV…LIQG), 1035 to 1055 (IWVF…LKSV), and 1069 to 1089 (IIAY…WLLD). An N-linked (GlcNAc...) asparagine glycan is attached at N1094. The helical transmembrane segment at 1119-1139 (LVIVFTLCFPIVFFIGLLPQV) threads the bilayer. An N-linked (GlcNAc...) asparagine glycan is attached at N1158. The next 4 membrane-spanning stretches (helical) occupy residues 1163–1183 (LLAA…LYGL), 1196–1216 (HVPV…YHLS), 1269–1289 (LVVC…TVFT), and 1297–1317 (YVLY…LPQV). N-linked (GlcNAc...) asparagine glycosylation is found at N1582, N1723, N1985, and N2075. Positions 2051–2123 (EDSDTGGGTS…SSLVRQSPAR (73 aa)) are disordered. Composition is skewed to polar residues over residues 2061–2081 (CPGN…QGST) and 2095–2118 (PTTS…SLVR). 3 N-linked (GlcNAc...) asparagine glycosylation sites follow: N2231, N2237, and N2263.

It belongs to the pecanex family.

Its subcellular location is the membrane. This chain is Pecanex-like protein 1, found in Mus musculus (Mouse).